The sequence spans 89 residues: UPF0237 protein CE1668 (89 aa).

Residues 4 to 78 (IMTVTGQDHT…KEQGLVIRIQ (75 aa)) form the ACT domain.

It belongs to the UPF0237 family.

This is UPF0237 protein CE1668 from Corynebacterium efficiens (strain DSM 44549 / YS-314 / AJ 12310 / JCM 11189 / NBRC 100395).